A 417-amino-acid chain; its full sequence is Guanine nucleotide-exchange factor SEC12 (417 aa).

The Cytoplasmic segment spans residues 1–388 (MGRRRGVELY…QLHLLPSRRS (388 aa)). The residue at position 10 (Tyr-10) is a 3'-nitrotyrosine. The disordered stretch occupies residues 101–135 (KGSKAEKSGSKEQGPRQRKGAAPAEKKSGAEVHPE). Basic and acidic residues-rich tracts occupy residues 103-115 (SKAE…EQGP) and 124-135 (AEKKSGAEVHPE). 3 WD repeats span residues 152–191 (STEP…KVLE), 194–232 (AHEG…TQLQ), and 298–337 (CGHE…RLYY). A helical transmembrane segment spans residues 389-409 (VPVWLLLLLCVGLIIVTILLL). Residues 410–417 (QSAFPGFL) lie on the Lumenal side of the membrane.

Interacts with SAR1B (GDP-bound form). Interacts with MIA2; recruits PREB to endoplasmic reticulum exit sites. Interacts with CIDEB; facilitating loading of SCAP-SREBP into COPII vesicles.

It is found in the endoplasmic reticulum membrane. Its subcellular location is the nucleus. Guanine nucleotide exchange factor (GEF) that regulates the assembly of the coat protein complex II/COPII in endoplasmic reticulum (ER) to Golgi vesicle-mediated transport. Selectively activates SAR1A and SAR1B by promoting the exchange of guanosine diphosphate (GDP) for guanosine triphosphate (GTP) in these small GTPases. In their activated GTP-bound state, SAR1A and SAR1B insert into the membrane of the endoplasmic reticulum where they recruit the remainder of the coat protein complex II/COPII which is responsible for both the sorting of proteins and the deformation and budding of membranes into vesicles destined to the Golgi. Its function is as follows. Was first identified based on its probable role in the regulation of pituitary gene transcription. Binds to the prolactin gene (PRL) promoter and seems to activate transcription. This is Guanine nucleotide-exchange factor SEC12 from Rattus norvegicus (Rat).